We begin with the raw amino-acid sequence, 260 residues long: Tryptophan synthase alpha chain (260 aa).

Active-site proton acceptor residues include E52 and D63.

The protein belongs to the TrpA family. Tetramer of two alpha and two beta chains.

It catalyses the reaction (1S,2R)-1-C-(indol-3-yl)glycerol 3-phosphate + L-serine = D-glyceraldehyde 3-phosphate + L-tryptophan + H2O. Its pathway is amino-acid biosynthesis; L-tryptophan biosynthesis; L-tryptophan from chorismate: step 5/5. The alpha subunit is responsible for the aldol cleavage of indoleglycerol phosphate to indole and glyceraldehyde 3-phosphate. The polypeptide is Tryptophan synthase alpha chain (Streptococcus mutans serotype c (strain ATCC 700610 / UA159)).